A 206-amino-acid polypeptide reads, in one-letter code: Large ribosomal subunit protein uL4 (206 aa).

It belongs to the universal ribosomal protein uL4 family. Part of the 50S ribosomal subunit.

Functionally, one of the primary rRNA binding proteins, this protein initially binds near the 5'-end of the 23S rRNA. It is important during the early stages of 50S assembly. It makes multiple contacts with different domains of the 23S rRNA in the assembled 50S subunit and ribosome. Its function is as follows. Forms part of the polypeptide exit tunnel. The chain is Large ribosomal subunit protein uL4 from Methylobacterium radiotolerans (strain ATCC 27329 / DSM 1819 / JCM 2831 / NBRC 15690 / NCIMB 10815 / 0-1).